Here is a 498-residue protein sequence, read N- to C-terminus: MHGSCSPWVMLPPPLLLLLLLIATGPTTALTEDEKQTMVDLHNQYRAQVSPPASDMLQMRWDDELAAFAKAYAQKCVWGHNKERGRRGENLFAITDEGMDVPLAVGNWHEEHEYYNFSTATCDPNQMCGHYTQVVWSKTERIGCGSHFCETLQGVEEANIHLLVCNYEPPGNVKGRKPYQEGTPCSQCPLGYSCENSLCEPMRNPEKAQDSPPRVTEVPSTRATEAPSSRETGTPSLATSETLHFSVTKVSDSLATESSPAVETKAPSSLATEGPSSMATEAQAFVTEVPLVSARHMQPSVDEGPVNFLTSTHIPVPKSMDEEASKSSATSVSPKKSLYPKMSLTESGESVPQIQEEAEPKDELSEPEAILPEAEAAPTEAEVELREPEAESPKAESPEAEAESPLSSEALVPVLPAQERGGQKASLEHSGHPASPSLPTFPSASGNATGGRTLALQSSWTGAENPEKADWDLKNSAHVWGPFLGLLLPSLLLLAGMV.

Residues 1–29 (MHGSCSPWVMLPPPLLLLLLLIATGPTTA) form the signal peptide. Residues 39–167 (VDLHNQYRAQ…ANIHLLVCNY (129 aa)) enclose the SCP domain. Asn116 carries N-linked (GlcNAc...) asparagine glycosylation. Disordered stretches follow at residues 204–277 (NPEK…GPSS), 317–407 (PKSM…SPLS), and 419–467 (ERGG…ENPE). Polar residues-rich tracts occupy residues 218–277 (VPST…GPSS) and 344–353 (LTESGESVPQ). Low complexity predominate over residues 367 to 380 (PEAILPEAEAAPTE). Positions 383 to 397 (VELREPEAESPKAES) are enriched in basic and acidic residues. The span at 437–447 (SLPTFPSASGN) shows a compositional bias: polar residues. N-linked (GlcNAc...) asparagine glycosylation is present at Asn447.

This sequence belongs to the CRISP family. Interacts with PSP94/MSMB. Post-translationally, N-glycosylated. In terms of tissue distribution, expressed strongly in aorta and skin, and weakly in adipose tissue (at protein level). In heart, found in the extracellular space surrounding cardiomyocytes (at protein level).

It localises to the secreted. Functionally, may inhibit cardiomyocyte growth. This is Peptidase inhibitor 16 (Pi16) from Mus musculus (Mouse).